The chain runs to 498 residues: MHLERDKVYDAPEGEVWSTVKPASTHNSAAPKRLAQRWNHRWSDESLTQGVSPLKDSSKTVKASTTIPLGTGRPTALYYPWQSVSMAGTEASRQPRGLKPTLAGNMTCSKGEAAFDLSSALNYGEPSGWSQLVAFFRETTGRVHRPPYADWDTTLTCGSTSAVDLVLRMFCNRGDCVLAERFTYPGTLMASRAQGLRTVGIAMDADGLVPEALDAALRGWDAASRGRKPFVLYTIPSGHNPTGVTQSAARKRAVYQVAERHDLLIVEDDPYFFLRLGRGGGGESLPTSYLSLDTAGRVVRVESTSKILAPGLRCGWLTASRQVVDMFGNFAEVGPSSPAGPSQAMLYKLLVESWGPEGFAGWLDYLSGEYGRRRDVMVAACERHLPREVCAWTAPTHGMFLWVGAALERHPRYQESGARDQDRDADADAELCRAVEDGICARAEANGVLVARGSWCRVGGGADRAFFRMTFVATAEAADLERGVAQFGRAVRDEFGLG.

The protein belongs to the class-I pyridoxal-phosphate-dependent aminotransferase family. It depends on pyridoxal 5'-phosphate as a cofactor.

Its pathway is mycotoxin biosynthesis. In terms of biological role, aminotransferase; part of the gene cluster that mediates the biosynthesis of swainsonine (SW), a cytotoxic fungal alkaloid and a potential cancer therapy drug. Swainsonine production occurs via a multibranched pathway and is dispensable for fungal colonization of plants and infection of insect hosts. The first step of swainsonine biosynthesis is the production of the precursor pipecolic acid (PA) via conversion of L-lysine (Lys) to 1-piperideine-6-carboxylate (P6C) by the aminotransferase swnA, the latter being further reduced to PA by the reductase swnR. PA can be converted from lysine by both the SW biosynthetic cluster and the unclustered genes such as lysine cyclodeaminase. The PKS-NRPS hybrid synthetase swnK uptakes and condensates PA and malonyl-CoA with and without skipping of the ketoreductase (KR) domain in order to produce 3 intermediates, 1-oxoindolizidine, (1S)-1-hydroxyindolizin, and (1R)-1-hydroxyindolizine; with the transisomer (1S)-1-hydroxyindolizin being predominant. The terminal thioester reductase (TE) domain of swnK is involved in reduction of the thioester bond to release the intermediate aldehydes. The oxidoreductase swnN could contribute to the reduction of 1-oxoindolizidine to (1S)-1-hydroxyindolizin and (1R)-1-hydroxyindolizine, contributing to the major route of SW production. The dioxygenase swnH2 would be responsible for the oxidization of (1R)-1-hydroxyindolizine into (1R,2S)-1,2-dihydroxyindolizine and of (1S)-1-hydroxyindolizin to yield both (1R,2S)-1,2-dihydroxyindolizine and (1S,2S)-1,2-dihydroxyindolizine. The dioxygenase swnH1 then performs the conversion of the 1,2-dihydroxyindolizine epimers to SW. This is Aminotransferase swnA from Metarhizium robertsii (strain ARSEF 23 / ATCC MYA-3075) (Metarhizium anisopliae (strain ARSEF 23)).